We begin with the raw amino-acid sequence, 174 residues long: Small ribosomal subunit protein uS5 (174 aa).

The 64-residue stretch at 19–82 (LREKMIAINR…EEARRNMTKI (64 aa)) folds into the S5 DRBM domain.

The protein belongs to the universal ribosomal protein uS5 family. Part of the 30S ribosomal subunit. Contacts proteins S4 and S8.

Its function is as follows. With S4 and S12 plays an important role in translational accuracy. In terms of biological role, located at the back of the 30S subunit body where it stabilizes the conformation of the head with respect to the body. The protein is Small ribosomal subunit protein uS5 of Albidiferax ferrireducens (strain ATCC BAA-621 / DSM 15236 / T118) (Rhodoferax ferrireducens).